Consider the following 396-residue polypeptide: 8-amino-7-oxononanoate synthase (396 aa).

Residue Arg21 participates in substrate binding. 112–113 (GY) serves as a coordination point for pyridoxal 5'-phosphate. A substrate-binding site is contributed by His137. Pyridoxal 5'-phosphate is bound by residues Ser183, His211, and Thr239. Position 242 is an N6-(pyridoxal phosphate)lysine (Lys242). Thr358 is a substrate binding site.

It belongs to the class-II pyridoxal-phosphate-dependent aminotransferase family. BioF subfamily. In terms of assembly, homodimer. Pyridoxal 5'-phosphate serves as cofactor.

It carries out the reaction 6-carboxyhexanoyl-[ACP] + L-alanine + H(+) = (8S)-8-amino-7-oxononanoate + holo-[ACP] + CO2. The protein operates within cofactor biosynthesis; biotin biosynthesis. Catalyzes the decarboxylative condensation of pimeloyl-[acyl-carrier protein] and L-alanine to produce 8-amino-7-oxononanoate (AON), [acyl-carrier protein], and carbon dioxide. This chain is 8-amino-7-oxononanoate synthase, found in Bordetella petrii (strain ATCC BAA-461 / DSM 12804 / CCUG 43448).